The primary structure comprises 634 residues: Chaperone protein HtpG (634 aa).

The interval 1–342 (MTVDTDKQTL…SADLSLNVSR (342 aa)) is a; substrate-binding. The segment at 343-559 (EILQSGPVVD…QGDLGLQMRQ (217 aa)) is b. The c stretch occupies residues 560-634 (LLEASGQAVP…LNKLLLELSA (75 aa)).

It belongs to the heat shock protein 90 family. In terms of assembly, homodimer.

The protein resides in the cytoplasm. Molecular chaperone. Has ATPase activity. The sequence is that of Chaperone protein HtpG from Xanthomonas campestris pv. campestris (strain ATCC 33913 / DSM 3586 / NCPPB 528 / LMG 568 / P 25).